The sequence spans 101 residues: MDQYVSTAPPRFPIAQLGTFKQDSAGMGRIFKGNLLQKKALTTFENEHHIRFFTLLVLFHVMVLLRNHSRIQGVSEDWKRANSIFRNFLRLKSSRNTAEAE.

The chain crosses the membrane as a helical span at residues 49 to 65; that stretch reads HIRFFTLLVLFHVMVLL.

The protein resides in the membrane. The sequence is that of Small integral membrane protein 21 (SMIM21) from Homo sapiens (Human).